The sequence spans 413 residues: MQAEIIAVGTEILMGQITNTNGAYMAKQLTALGIDSYHQQVVGDNGPRLEEAIKLAESRSNLVILIGGLGPTPDDLTKQTLAAHLNRKLVEDPDAMAKLQARVKQQQRPMTPNNQLQAMYPEGADILVNRVGLAVGAWIVNGQHTYVLLPGPPKEFVPMVDHELLPRLAKWSGHAEIMVSRVLRFFGIGESQLVTDLDDLIANQTDPTIATYIKDHEVTVRVTASGATEKDADAKLEPMIGAIMDRDGQYFYGYGDDNSLAKELVKTLAANDMQITAAESLTAGAFQAALGDVPGVSTYFKGGFVTYSLATKAAFLAIDARELAAHGVVSAFTAKAMAEHARRKAAADISVSFTGVAGPDTLEGQPAGTVWIGLARRGQLPEAHVYHFPGGRNDVRQRAVMTGMMLALRALQA.

It belongs to the CinA family.

This is Putative competence-damage inducible protein from Lacticaseibacillus casei (strain BL23) (Lactobacillus casei).